We begin with the raw amino-acid sequence, 211 residues long: Urease accessory protein UreG (211 aa).

11–18 (GPVGSGKT) contacts GTP.

The protein belongs to the SIMIBI class G3E GTPase family. UreG subfamily. Homodimer. UreD, UreF and UreG form a complex that acts as a GTP-hydrolysis-dependent molecular chaperone, activating the urease apoprotein by helping to assemble the nickel containing metallocenter of UreC. The UreE protein probably delivers the nickel.

Its subcellular location is the cytoplasm. In terms of biological role, facilitates the functional incorporation of the urease nickel metallocenter. This process requires GTP hydrolysis, probably effectuated by UreG. This is Urease accessory protein UreG from Photorhabdus laumondii subsp. laumondii (strain DSM 15139 / CIP 105565 / TT01) (Photorhabdus luminescens subsp. laumondii).